A 535-amino-acid chain; its full sequence is CTP synthase (535 aa).

Positions 1-268 are amidoligase domain; sequence MSTKYIFVTG…DQIVCDHLKL (268 aa). Serine 14 serves as a coordination point for CTP. Serine 14 is a UTP binding site. Residue 15–20 coordinates ATP; that stretch reads SMGKGI. Tyrosine 55 contributes to the L-glutamine binding site. Residue aspartate 72 participates in ATP binding. 2 residues coordinate Mg(2+): aspartate 72 and glutamate 142. Residues 149–151, 189–194, and lysine 225 contribute to the CTP site; these read DME and KTKIAQ. UTP contacts are provided by residues 189-194 and lysine 225; that span reads KTKIAQ. The 243-residue stretch at 293–535 folds into the Glutamine amidotransferase type-1 domain; it reads KIALVGKYVE…FIRVAVENSK (243 aa). Glycine 355 contacts L-glutamine. Residue cysteine 382 is the Nucleophile; for glutamine hydrolysis of the active site. Residues 383–386, glutamate 406, and arginine 464 each bind L-glutamine; that span reads LGMQ. Catalysis depends on residues histidine 509 and glutamate 511.

The protein belongs to the CTP synthase family. In terms of assembly, homotetramer.

The enzyme catalyses UTP + L-glutamine + ATP + H2O = CTP + L-glutamate + ADP + phosphate + 2 H(+). The catalysed reaction is L-glutamine + H2O = L-glutamate + NH4(+). It catalyses the reaction UTP + NH4(+) + ATP = CTP + ADP + phosphate + 2 H(+). It functions in the pathway pyrimidine metabolism; CTP biosynthesis via de novo pathway; CTP from UDP: step 2/2. Its activity is regulated as follows. Allosterically activated by GTP, when glutamine is the substrate; GTP has no effect on the reaction when ammonia is the substrate. The allosteric effector GTP functions by stabilizing the protein conformation that binds the tetrahedral intermediate(s) formed during glutamine hydrolysis. Inhibited by the product CTP, via allosteric rather than competitive inhibition. Its function is as follows. Catalyzes the ATP-dependent amination of UTP to CTP with either L-glutamine or ammonia as the source of nitrogen. Regulates intracellular CTP levels through interactions with the four ribonucleotide triphosphates. The sequence is that of CTP synthase from Lactococcus lactis subsp. lactis (strain IL1403) (Streptococcus lactis).